We begin with the raw amino-acid sequence, 525 residues long: GMP synthase [glutamine-hydrolyzing] (525 aa).

One can recognise a Glutamine amidotransferase type-1 domain in the interval 9–207 (RILILDFGSQ…VVDICKCEKL (199 aa)). Cys-86 serves as the catalytic Nucleophile. Catalysis depends on residues His-181 and Glu-183. Positions 208–400 (WTSASIIDDA…LGLPYDMLYR (193 aa)) constitute a GMPS ATP-PPase domain. An ATP-binding site is contributed by 235–241 (SGGVDSS).

Homodimer.

It catalyses the reaction XMP + L-glutamine + ATP + H2O = GMP + L-glutamate + AMP + diphosphate + 2 H(+). It functions in the pathway purine metabolism; GMP biosynthesis; GMP from XMP (L-Gln route): step 1/1. Catalyzes the synthesis of GMP from XMP. This is GMP synthase [glutamine-hydrolyzing] from Colwellia psychrerythraea (strain 34H / ATCC BAA-681) (Vibrio psychroerythus).